Reading from the N-terminus, the 201-residue chain is 3-isopropylmalate dehydratase small subunit (201 aa).

Belongs to the LeuD family. LeuD type 1 subfamily. Heterodimer of LeuC and LeuD.

It catalyses the reaction (2R,3S)-3-isopropylmalate = (2S)-2-isopropylmalate. It participates in amino-acid biosynthesis; L-leucine biosynthesis; L-leucine from 3-methyl-2-oxobutanoate: step 2/4. Its function is as follows. Catalyzes the isomerization between 2-isopropylmalate and 3-isopropylmalate, via the formation of 2-isopropylmaleate. In Shewanella amazonensis (strain ATCC BAA-1098 / SB2B), this protein is 3-isopropylmalate dehydratase small subunit.